Consider the following 97-residue polypeptide: Defensin-like protein 196 (97 aa).

An N-terminal signal peptide occupies residues 1–28; sequence MAKMSALSIFAIFIILVLVIFEIPEIEA. 4 disulfide bridges follow: C33–C85, C46–C70, C55–C80, and C59–C82.

The protein belongs to the DEFL family. Protease inhibitor I18 (RTI/MTI-2) subfamily.

It localises to the secreted. This is Defensin-like protein 196 (ATTI4) from Arabidopsis thaliana (Mouse-ear cress).